A 581-amino-acid chain; its full sequence is Putative aluminum-activated malate transporter 3 (581 aa).

6 helical membrane passes run M98–L118, Y122–S142, G148–I164, M167–A187, Y201–Y218, and F231–I251.

Belongs to the aromatic acid exporter (TC 2.A.85) family.

It localises to the membrane. Functionally, malate transporter. This is Putative aluminum-activated malate transporter 3 (ALMT3) from Arabidopsis thaliana (Mouse-ear cress).